Reading from the N-terminus, the 306-residue chain is UDP-3-O-acyl-N-acetylglucosamine deacetylase (306 aa).

3 residues coordinate Zn(2+): H79, H238, and D242. H265 serves as the catalytic Proton donor.

The protein belongs to the LpxC family. Zn(2+) is required as a cofactor.

The enzyme catalyses a UDP-3-O-[(3R)-3-hydroxyacyl]-N-acetyl-alpha-D-glucosamine + H2O = a UDP-3-O-[(3R)-3-hydroxyacyl]-alpha-D-glucosamine + acetate. It functions in the pathway glycolipid biosynthesis; lipid IV(A) biosynthesis; lipid IV(A) from (3R)-3-hydroxytetradecanoyl-[acyl-carrier-protein] and UDP-N-acetyl-alpha-D-glucosamine: step 2/6. In terms of biological role, catalyzes the hydrolysis of UDP-3-O-myristoyl-N-acetylglucosamine to form UDP-3-O-myristoylglucosamine and acetate, the committed step in lipid A biosynthesis. The sequence is that of UDP-3-O-acyl-N-acetylglucosamine deacetylase from Shewanella pealeana (strain ATCC 700345 / ANG-SQ1).